The chain runs to 684 residues: Glycine--tRNA ligase beta subunit (684 aa).

Belongs to the class-II aminoacyl-tRNA synthetase family. As to quaternary structure, tetramer of two alpha and two beta subunits.

It is found in the cytoplasm. It carries out the reaction tRNA(Gly) + glycine + ATP = glycyl-tRNA(Gly) + AMP + diphosphate. The sequence is that of Glycine--tRNA ligase beta subunit from Pseudomonas savastanoi pv. phaseolicola (strain 1448A / Race 6) (Pseudomonas syringae pv. phaseolicola (strain 1448A / Race 6)).